The primary structure comprises 422 residues: Exodeoxyribonuclease 7 large subunit (422 aa).

It belongs to the XseA family. Heterooligomer composed of large and small subunits.

It localises to the cytoplasm. It carries out the reaction Exonucleolytic cleavage in either 5'- to 3'- or 3'- to 5'-direction to yield nucleoside 5'-phosphates.. In terms of biological role, bidirectionally degrades single-stranded DNA into large acid-insoluble oligonucleotides, which are then degraded further into small acid-soluble oligonucleotides. This Leptospira borgpetersenii serovar Hardjo-bovis (strain JB197) protein is Exodeoxyribonuclease 7 large subunit.